The chain runs to 204 residues: ATP-dependent Clp protease proteolytic subunit 1 (204 aa).

Ser-97 (nucleophile) is an active-site residue. The active site involves His-122.

The protein belongs to the peptidase S14 family. As to quaternary structure, fourteen ClpP subunits assemble into 2 heptameric rings which stack back to back to give a disk-like structure with a central cavity, resembling the structure of eukaryotic proteasomes.

It is found in the cytoplasm. It carries out the reaction Hydrolysis of proteins to small peptides in the presence of ATP and magnesium. alpha-casein is the usual test substrate. In the absence of ATP, only oligopeptides shorter than five residues are hydrolyzed (such as succinyl-Leu-Tyr-|-NHMec, and Leu-Tyr-Leu-|-Tyr-Trp, in which cleavage of the -Tyr-|-Leu- and -Tyr-|-Trp bonds also occurs).. Its function is as follows. Cleaves peptides in various proteins in a process that requires ATP hydrolysis. Has a chymotrypsin-like activity. Plays a major role in the degradation of misfolded proteins. In Nostoc sp. (strain PCC 7120 / SAG 25.82 / UTEX 2576), this protein is ATP-dependent Clp protease proteolytic subunit 1.